A 42-amino-acid polypeptide reads, in one-letter code: Serine/threonine-protein phosphatase 5 (42 aa).

A required for autoinhibition region spans residues 38 to 42 (QLGVM).

This sequence belongs to the PPP phosphatase family. PP-5 (PP-T) subfamily. In terms of assembly, probably forms a complex composed of chaperones HSP90 and HSP70, co-chaperones STIP1/HOP, CDC37, PPP5C, PTGES3/p23, TSC1 and client protein TSC2. Probably forms a complex composed of chaperones HSP90 and HSP70, co-chaperones CDC37, PPP5C, TSC1 and client protein TSC2, CDK4, AKT, RAF1 and NR3C1; this complex does not contain co-chaperones STIP1/HOP and PTGES3/p23. Part of a complex with HSP90/HSP90AA1 and steroid receptors. Interacts (via TPR repeats) with HSP90AA1 (via TPR repeat-binding motif) or HSPA1A/HSPA1B; the interaction is direct and activates the phosphatase activity. Dissociates from HSPA1A/HSPA1B and HSP90AA1 in response to arachidonic acid. Interacts with CPNE1 (via VWFA domain). Interacts with CDC16, CDC27. Interacts with KLHDC10 (via the 6 Kelch repeats); inhibits the phosphatase activity on MAP3K5. Interacts with ATM and ATR; both interactions are induced by DNA damage and enhance ATM and ATR kinase activity. Interacts with RAD17; reduced by DNA damage. Interacts with nuclear receptors such as NR3C1/GCR and PPARG (activated by agonist); regulates their transactivation activities. Interacts (via TPR repeats) with S100 proteins S100A1, S100A2, S100A6, S100B and S100P; the interactions are calcium-dependent, strongly activate PPP5C phosphatase activity and compete with HSP90AA1 and MAP3K5 interactions. Interacts with SMAD2 and SMAD3 but not with SMAD1; decreases SMAD3 phosphorylation and protein levels. Interacts (via TPR repeats) with CRY1 and CRY2; the interaction with CRY2 down-regulates the phosphatase activity on CSNK1E. Interacts (via TPR repeats) with the active form of RAC1, GNA12 or GNA13; these interactions activate the phosphatase activity and translocate PPP5C to the cell membrane. Interacts with FLCN. Mg(2+) serves as cofactor. The cofactor is Mn(2+). In terms of processing, activated by at least two different proteolytic cleavages producing a 56 kDa and a 50 kDa form.

It is found in the nucleus. The protein resides in the cytoplasm. Its subcellular location is the cell membrane. The enzyme catalyses O-phospho-L-seryl-[protein] + H2O = L-seryl-[protein] + phosphate. The catalysed reaction is O-phospho-L-threonyl-[protein] + H2O = L-threonyl-[protein] + phosphate. Its activity is regulated as follows. Autoinhibited. In the autoinhibited state, the TPR domain interacts with the catalytic region and prevents substrate access to the catalytic pocket. Allosterically activated by various polyunsaturated fatty acids, free long-chain fatty-acids and long-chain fatty acyl-CoA esters, arachidonic acid being the most effective activator. HSP90A and probably RAC1, GNA12 and GNA13 can also release the autoinhibition by the TPR repeat. Activation by RAC1, GNA12 and GNA13 is synergistic with the one produced by fatty acids binding. Inhibited by okadaic acid. Serine/threonine-protein phosphatase that dephosphorylates a myriad of proteins involved in different signaling pathways including the kinases CSNK1E, ASK1/MAP3K5, PRKDC and RAF1, the nuclear receptors NR3C1, PPARG, ESR1 and ESR2, SMAD proteins and TAU/MAPT. Implicated in wide ranging cellular processes, including apoptosis, differentiation, DNA damage response, cell survival, regulation of ion channels or circadian rhythms, in response to steroid and thyroid hormones, calcium, fatty acids, TGF-beta as well as oxidative and genotoxic stresses. Participates in the control of DNA damage response mechanisms such as checkpoint activation and DNA damage repair through, for instance, the regulation ATM/ATR-signaling and dephosphorylation of PRKDC and TP53BP1. Inhibits ASK1/MAP3K5-mediated apoptosis induced by oxidative stress. Plays a positive role in adipogenesis, mainly through the dephosphorylation and activation of PPARG transactivation function. Also dephosphorylates and inhibits the anti-adipogenic effect of NR3C1. Regulates the circadian rhythms, through the dephosphorylation and activation of CSNK1E. May modulate TGF-beta signaling pathway by the regulation of SMAD3 phosphorylation and protein expression levels. Dephosphorylates and may play a role in the regulation of TAU/MAPT. Through their dephosphorylation, may play a role in the regulation of ions channels such as KCNH2. Dephosphorylate FNIP1, disrupting interaction with HSP90AA1/Hsp90. The polypeptide is Serine/threonine-protein phosphatase 5 (PPP5C) (Oryctolagus cuniculus (Rabbit)).